Consider the following 89-residue polypeptide: Small ribosomal subunit protein bS20 (89 aa).

This sequence belongs to the bacterial ribosomal protein bS20 family.

Binds directly to 16S ribosomal RNA. This chain is Small ribosomal subunit protein bS20, found in Hahella chejuensis (strain KCTC 2396).